The chain runs to 118 residues: Co-chaperonin GroES (118 aa).

This sequence belongs to the GroES chaperonin family. In terms of assembly, heptamer of 7 subunits arranged in a ring. Interacts with the chaperonin GroEL.

The protein localises to the cytoplasm. Functionally, together with the chaperonin GroEL, plays an essential role in assisting protein folding. The GroEL-GroES system forms a nano-cage that allows encapsulation of the non-native substrate proteins and provides a physical environment optimized to promote and accelerate protein folding. GroES binds to the apical surface of the GroEL ring, thereby capping the opening of the GroEL channel. The polypeptide is Co-chaperonin GroES (Helicobacter pylori (strain HPAG1)).